A 637-amino-acid chain; its full sequence is Threonine--tRNA ligase (637 aa).

One can recognise a TGS domain in the interval 1–61; it reads MIKVTLKDGK…DKDCNLEILT (61 aa). A catalytic region spans residues 242–532; sequence DHRKIGKELD…LIEHYAGAFP (291 aa). C333, H384, and H509 together coordinate Zn(2+).

Belongs to the class-II aminoacyl-tRNA synthetase family. As to quaternary structure, homodimer. Zn(2+) is required as a cofactor.

It is found in the cytoplasm. The enzyme catalyses tRNA(Thr) + L-threonine + ATP = L-threonyl-tRNA(Thr) + AMP + diphosphate + H(+). In terms of biological role, catalyzes the attachment of threonine to tRNA(Thr) in a two-step reaction: L-threonine is first activated by ATP to form Thr-AMP and then transferred to the acceptor end of tRNA(Thr). Also edits incorrectly charged L-seryl-tRNA(Thr). This Clostridium acetobutylicum (strain ATCC 824 / DSM 792 / JCM 1419 / IAM 19013 / LMG 5710 / NBRC 13948 / NRRL B-527 / VKM B-1787 / 2291 / W) protein is Threonine--tRNA ligase.